A 457-amino-acid polypeptide reads, in one-letter code: PDZ and LIM domain protein 7 (457 aa).

Residues 1 to 85 form the PDZ domain; it reads MDSFKVVLEG…RLSLGLSRAQ (85 aa). Ser78 carries the post-translational modification Phosphoserine. 2 disordered regions span residues 82–166 and 186–226; these read SRAQ…QSRS and FMKK…PWAV. Thr96 carries the phosphothreonine modification. Residue Arg103 is modified to Asymmetric dimethylarginine. The residue at position 111 (Ser111) is a Phosphoserine. Over residues 126-135 the composition is skewed to polar residues; the sequence is DSTLRQNGQL. Residues 144 to 157 are compositionally biased toward basic and acidic residues; the sequence is SKQRLMEDTEDWRP. Position 247 is a phosphoserine (Ser247). LIM zinc-binding domains are found at residues 280–338, 339–398, and 399–457; these read PVCH…VRYA, PNCA…MFGT, and KCRG…FSHV.

Specifically binds via its LIM zinc-binding 3 domain (LIM 3) domain to endocytic codes of INSR, but not with those of IGF1R, LDLR, TFRC, or EGFR. Interacts with various PKC isoforms through the LIM zinc-binding domains. Binds to RET in a phosphorylation-independent manner via its LIM zinc-binding domain 2 (LIM 2). Probably part of a complex with SHC and the RET dimer. Interacts with TPM2, TBX4 and TBX5.

The protein resides in the cytoplasm. The protein localises to the cytoskeleton. May function as a scaffold on which the coordinated assembly of proteins can occur. May play a role as an adapter that, via its PDZ domain, localizes LIM-binding proteins to actin filaments of both skeletal muscle and nonmuscle tissues. Involved in both of the two fundamental mechanisms of bone formation, direct bone formation (e.g. embryonic flat bones mandible and cranium), and endochondral bone formation (e.g. embryonic long bone development). Plays a role during fracture repair. Involved in BMP6 signaling pathway. The sequence is that of PDZ and LIM domain protein 7 (Pdlim7) from Mus musculus (Mouse).